An 804-amino-acid chain; its full sequence is Lon protease (804 aa).

The interval 1-23 (MSADSENETSESSPAGEATASTS) is disordered. The Lon N-terminal domain occupies 30–224 (LILLPVRNAV…KVLDAVAGRI (195 aa)). 376 to 383 (GPPGVGKT) contributes to the ATP binding site. The 182-residue stretch at 612-793 (TSLPGVVTGL…DDAVREIIED (182 aa)) folds into the Lon proteolytic domain. Catalysis depends on residues Ser-699 and Lys-742.

This sequence belongs to the peptidase S16 family. In terms of assembly, homohexamer. Organized in a ring with a central cavity.

It localises to the cytoplasm. The catalysed reaction is Hydrolysis of proteins in presence of ATP.. Functionally, ATP-dependent serine protease that mediates the selective degradation of mutant and abnormal proteins as well as certain short-lived regulatory proteins. Required for cellular homeostasis and for survival from DNA damage and developmental changes induced by stress. Degrades polypeptides processively to yield small peptide fragments that are 5 to 10 amino acids long. Binds to DNA in a double-stranded, site-specific manner. The chain is Lon protease from Paraburkholderia phytofirmans (strain DSM 17436 / LMG 22146 / PsJN) (Burkholderia phytofirmans).